The sequence spans 406 residues: Methylthioribose-1-phosphate isomerase (406 aa).

Catalysis depends on Asp277, which acts as the Proton donor.

It belongs to the eIF-2B alpha/beta/delta subunits family. MtnA subfamily.

It is found in the cytoplasm. The protein resides in the nucleus. It catalyses the reaction 5-(methylsulfanyl)-alpha-D-ribose 1-phosphate = 5-(methylsulfanyl)-D-ribulose 1-phosphate. It functions in the pathway amino-acid biosynthesis; L-methionine biosynthesis via salvage pathway; L-methionine from S-methyl-5-thio-alpha-D-ribose 1-phosphate: step 1/6. Catalyzes the interconversion of methylthioribose-1-phosphate (MTR-1-P) into methylthioribulose-1-phosphate (MTRu-1-P). The protein is Methylthioribose-1-phosphate isomerase of Debaryomyces hansenii (strain ATCC 36239 / CBS 767 / BCRC 21394 / JCM 1990 / NBRC 0083 / IGC 2968) (Yeast).